The following is a 238-amino-acid chain: Large ribosomal subunit protein uL1 (238 aa).

This sequence belongs to the universal ribosomal protein uL1 family. In terms of assembly, part of the 50S ribosomal subunit.

Its function is as follows. Binds directly to 23S rRNA. The L1 stalk is quite mobile in the ribosome, and is involved in E site tRNA release. Protein L1 is also a translational repressor protein, it controls the translation of the L11 operon by binding to its mRNA. The protein is Large ribosomal subunit protein uL1 of Trichormus variabilis (strain ATCC 29413 / PCC 7937) (Anabaena variabilis).